The following is a 444-amino-acid chain: Tol-Pal system protein TolB (444 aa).

An N-terminal signal peptide occupies residues 1–19 (MRNIIYFILSLLFSVTSYA).

Belongs to the TolB family. As to quaternary structure, the Tol-Pal system is composed of five core proteins: the inner membrane proteins TolA, TolQ and TolR, the periplasmic protein TolB and the outer membrane protein Pal. They form a network linking the inner and outer membranes and the peptidoglycan layer.

The protein resides in the periplasm. Part of the Tol-Pal system, which plays a role in outer membrane invagination during cell division and is important for maintaining outer membrane integrity. In Rickettsia rickettsii (strain Iowa), this protein is Tol-Pal system protein TolB.